The primary structure comprises 751 residues: Kelch-like protein 1 (751 aa).

Low complexity-rich tracts occupy residues 25-36 (PSPASSSPAGGS) and 74-90 (SSSS…ASSS). 3 disordered regions span residues 25-54 (PSPA…GPSQ), 69-98 (FWKK…LNGT), and 157-184 (SSIQ…SDLD). The span at 170-184 (LTSTNHSLTPQSDLD) shows a compositional bias: polar residues. Residues 215-282 (CDVILIVGNR…AYTGCLELKE (68 aa)) enclose the BTB domain. Kelch repeat units lie at residues 463–509 (TLYA…VIDD), 510–556 (KLFV…VLEG), 558–603 (IYAV…ALNG), 604–650 (KLYS…TCDG), 652–703 (LYAV…LLGD), and 704–750 (RLYA…VIKQ).

In terms of tissue distribution, highly expressed in brain.

It is found in the cytoplasm. Its subcellular location is the cytoskeleton. Functionally, may play a role in organizing the actin cytoskeleton of the brain cells. This is Kelch-like protein 1 (Klhl1) from Mus musculus (Mouse).